The following is a 218-amino-acid chain: Stress response regulator protein 1 (218 aa).

Residues 90–209 form the Response regulatory domain; the sequence is RFLLVDDNSI…YRVVLDVVDN (120 aa). A 4-aspartylphosphate modification is found at D142.

Its function is as follows. Required for stress adaptation, morphogenesis and virulence. This Meyerozyma guilliermondii (strain ATCC 6260 / CBS 566 / DSM 6381 / JCM 1539 / NBRC 10279 / NRRL Y-324) (Yeast) protein is Stress response regulator protein 1 (SRR1).